The chain runs to 89 residues: Elongation factor 1-beta (89 aa).

This sequence belongs to the EF-1-beta/EF-1-delta family.

Its function is as follows. Promotes the exchange of GDP for GTP in EF-1-alpha/GDP, thus allowing the regeneration of EF-1-alpha/GTP that could then be used to form the ternary complex EF-1-alpha/GTP/AAtRNA. The protein is Elongation factor 1-beta of Methanosarcina barkeri (strain Fusaro / DSM 804).